The following is a 1104-amino-acid chain: Extended synaptotagmin-1 (1104 aa).

An N-acetylmethionine modification is found at Met1. Over 1–38 (MERSPGEGPSPSPMDQPSAPSDPTDQPPAAHAKPDPGS) the chain is Cytoplasmic. Residues 1 to 48 (MERSPGEGPSPSPMDQPSAPSDPTDQPPAAHAKPDPGSGGQPAGPGAA) form a disordered region. The segment covering 37 to 47 (GSGGQPAGPGA) has biased composition (gly residues). Residues 39–59 (GGQPAGPGAAGEALAVLTSFG) form a helical membrane-spanning segment. Topologically, residues 60–62 (RRL) are lumenal. The helical transmembrane segment at 63-83 (LVLIPVYLAGAVGLSVGFVLF) threads the bilayer. Residues 84–1104 (GLALYLGWRR…LMDNKDKGSS (1021 aa)) are Cytoplasmic-facing. The stretch at 91–116 (WRRVRDEKERSLRAARQLLDDEEQLT) forms a coiled coil. In terms of domain architecture, SMP-LTD spans 135–313 (DVEKAEWLNK…LPNRLLVPLV (179 aa)). 4 C2 domains span residues 312–433 (LVPD…DDWF), 460–580 (QVLQ…QLSS), 627–751 (SVDA…DEWL), and 777–899 (LEEV…TLSS). A Phosphoserine; by CDK5 modification is found at Ser324. Ca(2+) contacts are provided by Lys344, Asp345, Asp357, Asp404, Asp406, Asp408, Asp410, and Asp411. Residues 617–641 (VDSENPQRGSSVDAPPRPCHTTPDS) are disordered. Residue Lys817 is modified to N6-acetyllysine. Ser820 and Ser941 each carry phosphoserine. Residues 924 to 950 (SHSYSHSSSSLSEEPELSGGPPHITSS) form a disordered region. The segment covering 925–946 (HSYSHSSSSLSEEPELSGGPPH) has biased composition (low complexity). Thr948 is modified (phosphothreonine). Phosphoserine occurs at positions 949 and 963. One can recognise a C2 5 domain in the interval 971–1093 (PLGQVKLTLW…DLSQGVARWY (123 aa)). Tyr1009 bears the Phosphotyrosine mark. Residues 1018 to 1025 (KNRGTKRR) are required for phosphatidylinositol 4,5-bisphosphate-dependent location at the cell membrane. At Ser1034 the chain carries Phosphoserine.

It belongs to the extended synaptotagmin family. In terms of assembly, interacts with ESYT2 and ESYT3. Interacts with ADGRD1; inhibiting the G-protein-coupled receptor activity of ADGRD1. Interaction with ADGRD1 is abolished when cytosolic calcium increases, relieving ADGRD1 G-protein-coupled receptor activity. Interacts (phosphorylated form) with SLC2A4. Phosphorylated on Ser residues in insulin-treated adipocytes (in vitro); this promotes interaction with SLC2A4. As to expression, widely expressed.

The protein resides in the endoplasmic reticulum membrane. It is found in the cell membrane. Its function is as follows. Binds calcium (via the C2 domains) and translocates to sites of contact between the endoplasmic reticulum and the cell membrane in response to increased cytosolic calcium levels. Helps tether the endoplasmic reticulum to the cell membrane and promotes the formation of appositions between the endoplasmic reticulum and the cell membrane. Acts as an inhibitor of ADGRD1 G-protein-coupled receptor activity in absence of cytosolic calcium. Binds glycerophospholipids in a barrel-like domain and may play a role in cellular lipid transport. In Homo sapiens (Human), this protein is Extended synaptotagmin-1.